The primary structure comprises 152 residues: Arginine repressor (152 aa).

This sequence belongs to the ArgR family.

The protein resides in the cytoplasm. Its pathway is amino-acid biosynthesis; L-arginine biosynthesis [regulation]. Its function is as follows. Regulates arginine biosynthesis genes. This chain is Arginine repressor, found in Caldicellulosiruptor bescii (strain ATCC BAA-1888 / DSM 6725 / KCTC 15123 / Z-1320) (Anaerocellum thermophilum).